A 431-amino-acid chain; its full sequence is MEDIIRIIQDGSLDGEKYFQSLKERQGKENAEIIKTVKFIIDNVKENGDKALIEYTSKFDKVELQSIEVTKEEIKAAYSKVENDFICALKTAKENIEEYHSKQVQNSYVITKENGIVMGRTVRGLDKVGIYVPGGTAAYPSSVIMNAVPAKVAGVNKIIMTTPPMKDGFVNPSILVAADLAGVDKIYKVGGAQAIAALAFGTETIDKVDKIVGPGNIFVAMAKKSVYGFVDIDMIAGPSEILVISDETGNPKFIAADLMSQAEHDTLASSILVTTSKELIGKVIEEIKLQVEGLSRKEIILEALRNFGAIILVDSISRAIEIGNVVAPEHLEIITPNPFEYLNDIKNAGSIFLGSYSPEPLGDYMAGPNHVLPTSGTARFSSPLSVDDFVKKSSYLYYSEKALRNVNDKVVKIAETEGLTAHANSIKVRFK.

Residues tyrosine 131, glutamine 193, and asparagine 216 each coordinate NAD(+). 3 residues coordinate substrate: serine 239, glutamine 261, and histidine 264. Zn(2+)-binding residues include glutamine 261 and histidine 264. Active-site proton acceptor residues include glutamate 329 and histidine 330. Residues histidine 330, aspartate 363, glutamate 417, and histidine 422 each contribute to the substrate site. Aspartate 363 contributes to the Zn(2+) binding site. Histidine 422 is a binding site for Zn(2+).

The protein belongs to the histidinol dehydrogenase family. It depends on Zn(2+) as a cofactor.

It catalyses the reaction L-histidinol + 2 NAD(+) + H2O = L-histidine + 2 NADH + 3 H(+). The protein operates within amino-acid biosynthesis; L-histidine biosynthesis; L-histidine from 5-phospho-alpha-D-ribose 1-diphosphate: step 9/9. In terms of biological role, catalyzes the sequential NAD-dependent oxidations of L-histidinol to L-histidinaldehyde and then to L-histidine. In Clostridium acetobutylicum (strain ATCC 824 / DSM 792 / JCM 1419 / IAM 19013 / LMG 5710 / NBRC 13948 / NRRL B-527 / VKM B-1787 / 2291 / W), this protein is Histidinol dehydrogenase.